The chain runs to 375 residues: MGYCQGVSQVAVVLLMFPKEKEAFLALAQLLTSKNLPDTVDGQLPMGPHSRASQVAPETTSSKVDRGVSTVCGKPKVVGKIYGGRDAAAGQWPWQASLLYWGSHLCGAVLIDSCWLVSTTHCFLNKSQAPKNYQVLLGNIQLYHQTQHTQKMSVHRIITHPDFEKLHPFGSDIAMLQLHLPMNFTSYIVPVCLPSRDMQLPSNVSCWITGWGMLTEDHKRGPVHTAVPSRLQAVCCSGCRGQRVGSRVGRFRSMIVHSEGQLRSLMPGDFHLGDSGGPLVCYLPSAWVLVGLASWGLDCRHPAYPSIFTRVTYFINWIDEIMRLTPLSDPALAPHTCSPPKPLRAAGLPGPCAALVLPQTWLLLPLTLRAPWQTL.

The signal sequence occupies residues 1–23; that stretch reads MGYCQGVSQVAVVLLMFPKEKEA. A disordered region spans residues 41–60; it reads DGQLPMGPHSRASQVAPETT. Over residues 51-60 the composition is skewed to polar residues; it reads RASQVAPETT. One can recognise a Peptidase S1 domain in the interval 81–323; sequence IYGGRDAAAG…FINWIDEIMR (243 aa). Residues C106 and C122 are joined by a disulfide bond. Active-site charge relay system residues include H121 and D172. N183 and N203 each carry an N-linked (GlcNAc...) asparagine glycan. C206 and C281 form a disulfide bridge. The active-site Charge relay system is the S275.

It belongs to the peptidase S1 family.

The protein resides in the secreted. The chain is Putative serine protease 47 (PRSS47P) from Homo sapiens (Human).